Here is a 608-residue protein sequence, read N- to C-terminus: Phosphogluconate dehydratase (608 aa).

The [4Fe-4S] cluster site is built by C154 and C221.

Belongs to the IlvD/Edd family. [4Fe-4S] cluster is required as a cofactor.

The catalysed reaction is 6-phospho-D-gluconate = 2-dehydro-3-deoxy-6-phospho-D-gluconate + H2O. It functions in the pathway carbohydrate metabolism; Entner-Doudoroff pathway. Catalyzes the dehydration of 6-phospho-D-gluconate to 2-dehydro-3-deoxy-6-phospho-D-gluconate. The sequence is that of Phosphogluconate dehydratase from Helicobacter pylori (strain ATCC 700392 / 26695) (Campylobacter pylori).